We begin with the raw amino-acid sequence, 477 residues long: Cytochrome P450 monooxygenase poxC (477 aa).

The chain crosses the membrane as a helical span at residues Ala24 to Tyr41. Residue Cys420 participates in heme binding.

This sequence belongs to the cytochrome P450 family. It depends on heme as a cofactor.

It is found in the membrane. It functions in the pathway secondary metabolite biosynthesis. Cytochrome P450 monooxygenase; part of the gene cluster that mediates the biosynthesis of oxaleimides, cytotoxic compounds containing an unusual disubstituted succinimide moiety. The first step of the pathway is provided by the HR-PKS poxF that serves in a new mode of collaborative biosynthesis with the PKS-NRPS poxE, by providing the olefin containing amino acid substrate via the synthesis of an ACP-bound dec-4-enoate. The cytochrome P450 monooxygenase poxM-catalyzed oxidation at the alpha-position creates the enzyme-bound 2-hydroxydec-4-enoyl-ACP thioester, which may be prone to spontaneous hydrolysis to yield 2-hydroxydec-4-enoic acid due to increased electrophilicity of the carbonyl. 2-hydroxydec-4-enoic acid can then be further oxidized by poxM to yield the alpha-ketoacid 2-oxodec-4-enoicacid, which is reductively aminated by the aminotransferase poxL to yield (S,E)-2-aminodec-4-enoic acid. The Hybrid PKS-NRPS synthetase poxE then performs condensation between the octaketide product of its PKS modules and the amino group of (S,E)-2-aminodec-4-enoic acid which is activated and incorporated by the adenylation domain. The resulting aminoacyl product can be cyclized by the Diels-Alderase PoxQ and reductively released by the reductive (R) domain of poxE to yield an aldehyde intermediate. The released aldehyde is then substrate for a Knoevenagel condensation by the hydrolyase poxO followed by an oxidation at the 5-position of the pyrrolidone ring. The presence of the olefin from the amino acid building block allows for migration of the substituted allyl group to occur. This allylic transposition reaction takes place in a conjugate addition, semipinacol-like fashion to yield a succinimide intermediate. Iterative two-electron oxidations of the C7 methyl of the succinimide intermediate to the carboxylic acid can be catalyzed by one of two remaining cytochrome P450 monooxygenasess poxC or poxD to yield oxaleimide A. Subsequent oxidation yields the maleimide scaffold oxaleimide I. Both oxaleimide A and oxaleimide I can undergo oxidative modifications in the decalin ring to yield the series of products oxaleimides B to H. The protein is Cytochrome P450 monooxygenase poxC of Penicillium oxalicum (strain 114-2 / CGMCC 5302) (Penicillium decumbens).